A 258-amino-acid chain; its full sequence is Malonyl-[acyl-carrier protein] O-methyltransferase (258 aa).

This sequence belongs to the methyltransferase superfamily.

It catalyses the reaction malonyl-[ACP] + S-adenosyl-L-methionine = malonyl-[ACP] methyl ester + S-adenosyl-L-homocysteine. The protein operates within cofactor biosynthesis; biotin biosynthesis. Its function is as follows. Converts the free carboxyl group of a malonyl-thioester to its methyl ester by transfer of a methyl group from S-adenosyl-L-methionine (SAM). It allows to synthesize pimeloyl-ACP via the fatty acid synthetic pathway. The chain is Malonyl-[acyl-carrier protein] O-methyltransferase from Hamiltonella defensa subsp. Acyrthosiphon pisum (strain 5AT).